A 70-amino-acid polypeptide reads, in one-letter code: Small ribosomal subunit protein bS21 (70 aa).

This sequence belongs to the bacterial ribosomal protein bS21 family.

The polypeptide is Small ribosomal subunit protein bS21 (Helicobacter acinonychis (strain Sheeba)).